Here is a 64-residue protein sequence, read N- to C-terminus: Large ribosomal subunit protein bL35 (64 aa).

The segment covering 1 to 44 (MSKIKSHSGAAKRFKRTANGFKHKQSHTSHILTKKSTKRKRHLR) has biased composition (basic residues). Positions 1–48 (MSKIKSHSGAAKRFKRTANGFKHKQSHTSHILTKKSTKRKRHLRSMNQ) are disordered.

Belongs to the bacterial ribosomal protein bL35 family.

This chain is Large ribosomal subunit protein bL35, found in Marinomonas sp. (strain MWYL1).